The following is a 1404-amino-acid chain: DNA-directed RNA polymerase subunit beta' (1404 aa).

Residues C70, C72, C85, and C88 each contribute to the Zn(2+) site. Positions 460, 462, and 464 each coordinate Mg(2+). 4 residues coordinate Zn(2+): C825, C899, C906, and C909.

Belongs to the RNA polymerase beta' chain family. As to quaternary structure, the RNAP catalytic core consists of 2 alpha, 1 beta, 1 beta' and 1 omega subunit. When a sigma factor is associated with the core the holoenzyme is formed, which can initiate transcription. Mg(2+) is required as a cofactor. Requires Zn(2+) as cofactor.

The enzyme catalyses RNA(n) + a ribonucleoside 5'-triphosphate = RNA(n+1) + diphosphate. Functionally, DNA-dependent RNA polymerase catalyzes the transcription of DNA into RNA using the four ribonucleoside triphosphates as substrates. The protein is DNA-directed RNA polymerase subunit beta' of Nitrosomonas europaea (strain ATCC 19718 / CIP 103999 / KCTC 2705 / NBRC 14298).